The sequence spans 331 residues: UDP-N-acetylenolpyruvoylglucosamine reductase (331 aa).

The region spanning 54-221 (RVGGAAELYV…TQATFQLQPG (168 aa)) is the FAD-binding PCMH-type domain. The active site involves arginine 200. Serine 251 (proton donor) is an active-site residue. Glutamate 321 is an active-site residue.

This sequence belongs to the MurB family. It depends on FAD as a cofactor.

Its subcellular location is the cytoplasm. It catalyses the reaction UDP-N-acetyl-alpha-D-muramate + NADP(+) = UDP-N-acetyl-3-O-(1-carboxyvinyl)-alpha-D-glucosamine + NADPH + H(+). Its pathway is cell wall biogenesis; peptidoglycan biosynthesis. Cell wall formation. The protein is UDP-N-acetylenolpyruvoylglucosamine reductase of Trichormus variabilis (strain ATCC 29413 / PCC 7937) (Anabaena variabilis).